The sequence spans 186 residues: Ribosome-recycling factor (186 aa).

The protein belongs to the RRF family.

It is found in the cytoplasm. Its function is as follows. Responsible for the release of ribosomes from messenger RNA at the termination of protein biosynthesis. May increase the efficiency of translation by recycling ribosomes from one round of translation to another. The polypeptide is Ribosome-recycling factor (Endomicrobium trichonymphae).